The primary structure comprises 306 residues: Ornithine carbamoyltransferase (306 aa).

Carbamoyl phosphate is bound by residues 46–49 (STRT), glutamine 73, arginine 97, and 124–127 (HPTQ). Residues asparagine 156, aspartate 220, and 224–225 (SM) each bind L-ornithine. Carbamoyl phosphate-binding positions include 260 to 261 (CL) and arginine 288.

This sequence belongs to the aspartate/ornithine carbamoyltransferase superfamily. OTCase family.

The protein localises to the cytoplasm. It carries out the reaction carbamoyl phosphate + L-ornithine = L-citrulline + phosphate + H(+). The protein operates within amino-acid biosynthesis; L-arginine biosynthesis; L-arginine from L-ornithine and carbamoyl phosphate: step 1/3. Functionally, reversibly catalyzes the transfer of the carbamoyl group from carbamoyl phosphate (CP) to the N(epsilon) atom of ornithine (ORN) to produce L-citrulline. In Campylobacter jejuni (strain RM1221), this protein is Ornithine carbamoyltransferase.